A 347-amino-acid polypeptide reads, in one-letter code: Protein POOR HOMOLOGOUS SYNAPSIS 1 (347 aa).

The protein resides in the cytoplasm. In terms of biological role, required for accurate chromosome segregation in meiosis. Required for pairing to occur between homologous chromosomes. Acts in early recombination steps and ensures pairing fidelity and proper repair of meiotic DNA double-strand-breaks. Regulates recombination and pairing of homologous chromosomes during meiotic prophase by controlling transport of RAD50 from cytoplasm to the nucleus. May affect pairing of the gene-rich fraction of the genome rather than preventing pairing between repetitive DNA elements. The polypeptide is Protein POOR HOMOLOGOUS SYNAPSIS 1 (Zea mays (Maize)).